The primary structure comprises 109 residues: Phosphoribosyl-ATP pyrophosphatase (109 aa).

The protein belongs to the PRA-PH family.

The protein localises to the cytoplasm. It carries out the reaction 1-(5-phospho-beta-D-ribosyl)-ATP + H2O = 1-(5-phospho-beta-D-ribosyl)-5'-AMP + diphosphate + H(+). It functions in the pathway amino-acid biosynthesis; L-histidine biosynthesis; L-histidine from 5-phospho-alpha-D-ribose 1-diphosphate: step 2/9. This chain is Phosphoribosyl-ATP pyrophosphatase, found in Alkalilimnicola ehrlichii (strain ATCC BAA-1101 / DSM 17681 / MLHE-1).